The following is a 931-amino-acid chain: G patch domain-containing protein 1 (931 aa).

The segment covering 1-12 (MAALDSDSDEDL) has biased composition (acidic residues). Disordered stretches follow at residues 1 to 41 (MAAL…TVRD), 72 to 92 (TPSSFVSSRQNRADKSVLGPE), and 169 to 213 (QGIG…YLPE). Ala-2 is modified (N-acetylalanine). A phosphoserine mark is found at Ser-6 and Ser-8. A compositionally biased stretch (polar residues) spans 72-81 (TPSSFVSSRQ). The 47-residue stretch at 152–198 (KLSVGFELLRKMGWKEGQGIGPRVKRRPRRQKPDPGVKIYGCALPPG) folds into the G-patch domain. Over residues 202–211 (GSEDEDDDYL) the composition is skewed to acidic residues. Residue Lys-313 forms a Glycyl lysine isopeptide (Lys-Gly) (interchain with G-Cter in SUMO2) linkage. 2 positions are modified to phosphoserine: Ser-358 and Ser-479. Disordered stretches follow at residues 567–594 (SRFTHAQEEDDSEQVEVPRDQENDVSDK) and 659–931 (SPVT…LRRQ). Basic and acidic residues predominate over residues 582–593 (EVPRDQENDVSD). Over residues 659–668 (SPVTQASSEK) the composition is skewed to polar residues. Positions 669-695 (VAQHRASDKSRKPSRWDTSKEEKKEDS) are enriched in basic and acidic residues. Position 715 is a phosphoserine (Ser-715). Over residues 769–780 (SEDEQGDSEDDQ) the composition is skewed to acidic residues. A compositionally biased stretch (basic and acidic residues) spans 781–792 (EGTREADFKSSQ). Positions 852–888 (EKHKKNKEKHKTKKEHRRKKEKKKKHRKHKHKGKQKN) are enriched in basic residues. The span at 896–905 (SSESTDSSDS) shows a compositional bias: low complexity. A compositionally biased stretch (basic residues) spans 922–931 (RLKRLPLRRQ).

It belongs to the GPATCH1 family.

The chain is G patch domain-containing protein 1 (GPATCH1) from Bos taurus (Bovine).